A 661-amino-acid chain; its full sequence is MNPDLRRERDAASFDAEKLTYILDGGSERTRRRREIENLILNDPDFKHEDLNFLTRSERYEIAVRKSATMVKKMRDFGIADPEEIMWFKKPQLINFVEPVGLTYSMFIPTLLDQGTTAQQQKWLPPTQGLQIIGTYAQTEMGHGTHLRGLETTATYDPKTQEFILNSPTVTSIKWWPGGLGKTSNHAIVLAQLYTKGECYGLHAFIVPIREMGTHKPFPGIIVGDIGPKFGYDEMDNGYLKMDNYRIPRENMLMKYAQVKPDGTYVKPLSNKLTYGTMVFVRSFLVGEAARSLSKACTIAIRYSLIRHQSEIRPGDPEPQILDFQTQQYKLFPLLATAYAFQFVGAYMKETYHRINVDINQGNLNELPELHALTAGLKAFTSWTTNSGIEACRMACGGHGYSHCSGLPNIYVTFTPTCTFEGENTVMMLQTARFLMKSYDQVHSGKLVGGMVSYLNDLPSQRIQPQQVAAWPAMVDINNPDSLTEAYKHRAARLVEAAARNLQAEMKHRKSKEIAWNFTSVDLVRASEAHCHYVVVKLFSGNLSKIDDKPIQAVLTNLCLLYALYGISQNSGDFLQGGILTESQLTQVNQRVKELLTLIRPESAALVDAFDFQDVSLGSVLGRYDGNIYENMFEWAKKSPLNKSEVHESYHKHLKPLQSKL.

Residues Lys89 and Lys90 each carry the N6-succinyllysine modification. Thr139 lines the FAD pocket. Lys159 bears the N6-succinyllysine mark. Gly178 contacts FAD. Lys216 carries the post-translational modification N6-acetyllysine. The residue at position 241 (Lys241) is an N6-succinyllysine. 3 positions are modified to N6-acetyllysine: Lys255, Lys267, and Lys272. Lys349 is subject to N6-succinyllysine. Glu421 serves as the catalytic Proton acceptor. An N6-acetyllysine; alternate mark is found at Lys437, Lys446, Lys512, and Lys637. An N6-succinyllysine; alternate mark is found at Lys437, Lys446, Lys512, and Lys637. The residue at position 643 (Lys643) is an N6-succinyllysine. At Ser649 the chain carries Phosphoserine. Lys652 is subject to N6-acetyllysine. An N6-succinyllysine modification is found at Lys655. The short motif at Ser659–Leu661 is the Microbody targeting signal element.

It belongs to the acyl-CoA oxidase family. Homodimer. Interacts with LONP2. FAD serves as cofactor.

The protein resides in the peroxisome. The enzyme catalyses a 2,3-saturated acyl-CoA + O2 = a (2E)-enoyl-CoA + H2O2. It carries out the reaction hexadecanoyl-CoA + O2 = (2E)-hexadecenoyl-CoA + H2O2. It catalyses the reaction dodecanoyl-CoA + O2 = (2E)-dodecenoyl-CoA + H2O2. The catalysed reaction is octanoyl-CoA + O2 = (2E)-octenoyl-CoA + H2O2. The enzyme catalyses decanoyl-CoA + O2 = (2E)-decenoyl-CoA + H2O2. It carries out the reaction tetradecanoyl-CoA + O2 = (2E)-tetradecenoyl-CoA + H2O2. It catalyses the reaction hexadecanedioyl-CoA + O2 = (2E)-hexadecenedioyl-CoA + H2O2. The catalysed reaction is tetracosanoyl-CoA + O2 = (2E)-tetracosenoyl-CoA + H2O2. The enzyme catalyses glutaryl-CoA + O2 = (2E)-glutaconyl-CoA + H2O2. It carries out the reaction hexanoyl-CoA + O2 = (2E)-hexenoyl-CoA + H2O2. It catalyses the reaction octadecanoyl-CoA + O2 = (2E)-octadecenoyl-CoA + H2O2. The catalysed reaction is (5Z,8Z,11Z,14Z,17Z)-eicosapentaenoyl-CoA + O2 = (2E,5Z,8Z,11Z,14Z,17Z)-icosahexaenoyl-CoA + H2O2. The enzyme catalyses (6Z,9Z,12Z,15Z,18Z,21Z)-tetracosahexaenoyl-CoA + O2 = (2E,6Z,9Z,12Z,15Z,18Z,21Z)-tetracosaheptaenoyl-CoA + H2O2. It participates in lipid metabolism; peroxisomal fatty acid beta-oxidation. Functionally, involved in the initial and rate-limiting step of peroxisomal beta-oxidation of straight-chain saturated and unsaturated very-long-chain fatty acids. Catalyzes the desaturation of fatty acyl-CoAs such as palmitoyl-CoA (hexadecanoyl-CoA) to 2-trans-enoyl-CoAs ((2E)-enoyl-CoAs) such as (2E)-hexadecenoyl-CoA, and donates electrons directly to molecular oxygen (O(2)), thereby producing hydrogen peroxide (H(2)O(2)). Isoform 2 shows higher activity with hexadecanoyl-CoA as substrate than isoform 1. This Phascolarctos cinereus (Koala) protein is Peroxisomal acyl-coenzyme A oxidase 1 (ACOX1).